The primary structure comprises 2787 residues: MEDHGIVETLNFLSSTKIKERNNALDELTTILKEDPERIPTKALSTTAEALVELLASEHTKYCDLLRNLTVSTTNKLSLSENRLSTISYVLRLFVEKSCERFKVKTLKLLLAVVPELMVKDGSKSLLDAVSVHLSFALDALIKSDPFKLKFMIHQWISLVDKICEYFQSQMKLSMVDKTLTNFISILLNLLALDTVGIFQVTRTITWTVIDFLRLSKKENGNTRLIMSLINQLILKCHCFSVIDTLMLIKEAWSYNLTIGCTSNELVQDQLSLFDVMSSELMNHKLPYMIGQENYVEELRSESLVSLYREYILLRLSNYKPQLFTVNHVEFSYIRGSRDKNSWFALPDFRLRDRGGRSVWLKILGITKSLLTYFALNRKNENYSLLFKRRKCDSDIPSILRISDDMDTFLIHLLEENSSHEFEVLGLQLCSFYGTLQDFTKSFAEQLKELLFSKFEKIQCFNWVCFSFIPLLSQKECELSNGDMARLFKVCLPLVKSNESCQLSCLLLANSIKFSKQLLSDEKTINQIYDLYELSDILGPILVTNESFMLWGYLQYVGKDFQSMNGISSADRIFEWLKSKWNQLRGTDAKQDQFCNFISWLGNKYDPENPFNDKKGEGANPVSLCWDESHKIWQHFQEQREFLLGVKPEEKSECFNTPFFNLPKVSLDLTRYNEILYRLLENIESDAFSSPLQKFTWVAKLIQIVDNLCGDSTFSEFIAAYKRTTLITIPQLSFDSQNSYQSFFEEVLSIRTINVDHLVLDKINMKEIVNDFIRMQKNKSQTGTSAINYFEASSEDTTQNNSPYTIGGRFQKPLHSTIDKAVRAYLWSSRNKSISERLVAILEFSDCVSTDVFISYLGTVCQWLKQAIGEKSSYNKILEEFTEVLGEKLLCNHYSSSNQAMLLLTSYIEAIRPQWLSYPEQPLNSDCNDILDWIISRFEDNSFTGVAPTVNLSMLLLSLLQNHDLSHGSIRGGKQRVFATFIKCLQKLDSSNIINIMNSISSYMAQVSYKNQSIIFYEIKSLFGPPQQSIEKSAFYSLAMSMLSLVSYPSLVFSLEDMMTYSGFNHTRAFIQQALNKITVAFRYQNLTELFEYCKFDLIMYWFNRTKVPTSKLEKEWDISLFGFADIHEFLGRYFVEISAIYFSQGFNQKWILDMLHAITGNGDAYLVDNSYYLCIPLAFISGGVNELIFDILPQISGKTTVKYHKKYRLLMLKWIIRFTDLGSLTELRSTVEKLFPTSYLSPYLFENSSVSMRYQYPLHIPLALGATLVQTQFAHEKNNTHEFKLLFLSVITDLEKTSTYIGKLRCARELKYLFVLYENVLVKSSTLNFIIIRLSKFLIDTQIHDEVITIFSSLLNLADKNTFEIEPSLPNLFCKIFIYLRENKQLSPSFQQAIKLLEHRDLIKIKTWKYCLDAIFGNIVQDDIYENTELLDASDCGVDDVVLVSLLFSYARRPVASKIGCSLSKAAAINILKHHVPKEYLSKNFKLWFAALSRRILQQEVQRERSTNFNNEVHLKNFEMVFRHPEQPHMIYQRISTFNKEAELYDSTEVFFISECILTYLVGYSIGNSESEFCFRDNIMNENKDKVAPLDKDVLNAIYPLANNFGMESFICDTYLSVNEPYNCWLSKFARSLIHQISFNIPPIVCLYPLCKGSTAFCELVLTDLFFLSTTYDPKSCLNWSNRIFTQIAMLLHVKDSEIKLKMLFNVIKMIRMGSRCKERNCLRIYSSLDLQEICQISLKIKEFKFGYLLFEEMNMPNIREMNINTLQKIYECINDGDFLAGLPVPHSIEGVLNSINRIDSDTWKRFLFNNADFDANYTTSLEEEKESLIKATEDSGFYGLTSLLESRLSGSSDVYKWNLELGDWKLLTPKVVDSKAKGLYYAIKNLPQDVGFAEKSLEKSLLTIFDSRQHFISQTEWMDTLNAIIEFIKIAAIPQDVTSFPQTLMSIMKADKERLNTIDFYDHKTTLKSRHTLMNVLSRNSLDENVKCSKYLRLGSIIQLANYVQLAIANGAPQDALRNATLMSKTVKNIAKLYDDPSVVSQIEKLASFTSANALWESREYKAPVMIMRDLLAQNEKNISESILYDDFKLLINVPMDQIKARLVKWSSESRLEPAAAIYEKIIVNWDINVEDHESCSDVFYTLGSFLDEQAQKLRSNGEIEDREHRSYTGKSTLKALELIYKNTKLPENERKDAKRHYNRVLLQYNRDSEVLKALLLQKEKFLWHALHFYLNTLVFSNRYDNDIIDKFCGLWFENDDNSKINQLLYKEIGTIPSWKFLPWVNQIASKISMEENEFQKPLQLTMKRLLYKLPYDSLYSVMSILLYEKQSNKDTNISQKIQAVKKILLELQGYDRGAFAKKYLLPVQEFCEMSVELANLKFVQNTKTLRLANLKIGQYWLKQLNMEKLPLPTSNFTVKSSADGRKARPYIVSVNETVGITTTGLSLPKIVTFNISDGTTQKALMKGSNDDLRQDAIMEQVFQQVNKVLQNDKVLRNLDLGIRTYKVVPLGPKAGIIEFVANSTSLHQILSKLHTNDKITFDQARKGMKAVQTKSNEERLKAYLKITNEIKPQLRNFFFDSFPDPLDWFEAKKTYTKGVAASSIVGYILGLGDRHLNNILLDCSTGEPIHIDLGIAFDQGKLLPIPELVPFRLTRDIVDGFGVTGVDGLFRRSCERVYAVLRKDYVKVMCVLNILKWDPLYSWVMSPVKKYEHLFEEEHEITNFDNVSKFISNNDRNENQESYRALKGVEEKLMGNGLSVESSVQDLIQQATDPSNLSVIYMGWSPFY.

The FAT domain maps to 1734–2326; sequence EICQISLKIK…LYSVMSILLY (593 aa). The PI3K/PI4K catalytic domain maps to 2434–2746; the sequence is NETVGITTTG…ENQESYRALK (313 aa). Positions 2440–2446 are G-loop; it reads TTTGLSL. Residues 2609-2617 are catalytic loop; that stretch reads GLGDRHLNN. The tract at residues 2629–2653 is activation loop; it reads HIDLGIAFDQGKLLPIPELVPFRLT. The FATC domain occupies 2755-2787; that stretch reads NGLSVESSVQDLIQQATDPSNLSVIYMGWSPFY.

This sequence belongs to the PI3/PI4-kinase family. ATM subfamily. In terms of assembly, interacts with XRS2 and associates with DNA double-strand breaks.

It is found in the nucleus. The protein localises to the chromosome. The protein resides in the telomere. The catalysed reaction is L-seryl-[protein] + ATP = O-phospho-L-seryl-[protein] + ADP + H(+). It catalyses the reaction L-threonyl-[protein] + ATP = O-phospho-L-threonyl-[protein] + ADP + H(+). Its function is as follows. Serine/threonine protein kinase which activates checkpoint signaling upon genotoxic stresses such as ionizing radiation (IR), ultraviolet light (UV), or DNA replication stalling, thereby acting as a DNA damage sensor. Recognizes the substrate consensus sequence [ST]-Q. Recruited by the MRX-complex to sites of DNA lesions immediately after damage to initiate non-homologous end-joining (NHEJ). Subsequently displaced by the RPA complex in a reaction probably involving the SAE2 protein. Phosphorylates MRE11 and XRS2, 2 subunits of the MRX-complex. The phosphorylation of MRE11 is a feedback response from the checkpoint signaling pathway. Phosphorylates RAD9, CHK1 and RAD53, leading to the activation of the CHK1 and RAD23 kinases involved in the DNA damage response cascade. Phosphorylates histone H2A to form H2AS128ph (gamma-H2A) at sites of DNA damage, also involved in the regulation of DNA damage response mechanism. Also phosphorylates SLX4 and RTT107 which are involved in genome stability. Required for the control of telomere length and genome stability. The chain is Serine/threonine-protein kinase TEL1 (TEL1) from Saccharomyces cerevisiae (strain ATCC 204508 / S288c) (Baker's yeast).